The chain runs to 400 residues: Enoyl-[acyl-carrier-protein] reductase [NADH] (400 aa).

NAD(+)-binding positions include 48–53, 74–75, 111–112, and 139–140; these read GSSSGY, FE, DA, and LA. Substrate is bound at residue tyrosine 225. The active-site Proton donor is the tyrosine 235. NAD(+)-binding positions include lysine 244 and 273–275; that span reads VVT.

Belongs to the TER reductase family. In terms of assembly, monomer.

It carries out the reaction a 2,3-saturated acyl-[ACP] + NAD(+) = a (2E)-enoyl-[ACP] + NADH + H(+). It participates in lipid metabolism; fatty acid biosynthesis. In terms of biological role, involved in the final reduction of the elongation cycle of fatty acid synthesis (FAS II). Catalyzes the reduction of a carbon-carbon double bond in an enoyl moiety that is covalently linked to an acyl carrier protein (ACP). This is Enoyl-[acyl-carrier-protein] reductase [NADH] from Shewanella baltica (strain OS223).